The chain runs to 317 residues: MTTALDQLKQYTTVVADTGDFQQLAQYKPQDATTNPSLILKAVQKDDYKPLLEKTVKAHASKPVGAIIDQLLIAFGTEILKIIPGRVSTEVDARLSFDTEGSIAKGRELIALYKEHGIGRERVLIKLASTWEGIRAAEVLQKEGIHCNMTLLFSLAQAAACAEAGAQLISPFVGRIYDWYKKNAGSAWDEAKDGGANDPGVKSVRRIYAYYKKFGYKTEVMGASFRTPGQILELAGCDLLTISPDLLQKLHESTEKVERKLSPDIAKESDIERVPVDESSFRFLVNDEAMATEKLAEGIRAFAADAIKLEKLIDALR.

The active-site Schiff-base intermediate with substrate is Lys126.

This sequence belongs to the transaldolase family. Type 1 subfamily. In terms of assembly, homodimer.

The protein localises to the cytoplasm. It carries out the reaction D-sedoheptulose 7-phosphate + D-glyceraldehyde 3-phosphate = D-erythrose 4-phosphate + beta-D-fructose 6-phosphate. It participates in carbohydrate degradation; pentose phosphate pathway; D-glyceraldehyde 3-phosphate and beta-D-fructose 6-phosphate from D-ribose 5-phosphate and D-xylulose 5-phosphate (non-oxidative stage): step 2/3. Functionally, transaldolase is important for the balance of metabolites in the pentose-phosphate pathway. This Paraburkholderia xenovorans (strain LB400) protein is Transaldolase.